A 448-amino-acid polypeptide reads, in one-letter code: UDP-N-acetylmuramoylalanine--D-glutamate ligase (448 aa).

116–122 (GSNAKST) lines the ATP pocket.

The protein belongs to the MurCDEF family.

The protein resides in the cytoplasm. The catalysed reaction is UDP-N-acetyl-alpha-D-muramoyl-L-alanine + D-glutamate + ATP = UDP-N-acetyl-alpha-D-muramoyl-L-alanyl-D-glutamate + ADP + phosphate + H(+). It functions in the pathway cell wall biogenesis; peptidoglycan biosynthesis. Its function is as follows. Cell wall formation. Catalyzes the addition of glutamate to the nucleotide precursor UDP-N-acetylmuramoyl-L-alanine (UMA). In Pseudomonas fluorescens (strain ATCC BAA-477 / NRRL B-23932 / Pf-5), this protein is UDP-N-acetylmuramoylalanine--D-glutamate ligase.